Consider the following 609-residue polypeptide: MFS siderochrome iron transporter 1 (609 aa).

Basic and acidic residues-rich tracts occupy residues 1–17 and 25–34; these read MSAL…EDNT and PHEKEIHETP. The disordered stretch occupies residues 1 to 69; the sequence is MSALTKIREG…NDSDVPSEDV (69 aa). The next 14 membrane-spanning stretches (helical) occupy residues 81–101, 125–145, 154–174, 182–202, 220–240, 245–265, 300–320, 329–349, 368–390, 407–427, 432–452, 469–489, 496–516, and 573–593; these read LTWG…LFLI, LMTT…IPMA, AEGF…MAVS, AAQV…GVLA, SPYM…VIDV, WGFG…FLVL, VIGI…FNLA, TGYI…FGVW, SVVA…NYFF, YVNS…GFLI, FYKW…GLMI, IFIS…VLAA, AAAL…GGAI, and IRML…VPML.

The protein belongs to the major facilitator superfamily.

Its subcellular location is the cell membrane. Its function is as follows. Major facilitator transporter involved in extracellular siderophore uptake. Gibberella zeae produces extracellular coprogen-type siderophores as well as the intracellular siderophore ferricrocin. The role of extracellular siderophores is to supply iron to the fungus during plant infection, and the intracellular ferricrocin is required for intracellular iron distribution and storage with a crucial role in ascus and ascospore development. This chain is MFS siderochrome iron transporter 1, found in Gibberella zeae (strain ATCC MYA-4620 / CBS 123657 / FGSC 9075 / NRRL 31084 / PH-1) (Wheat head blight fungus).